The primary structure comprises 285 residues: Polyamine aminopropyltransferase (285 aa).

A PABS domain is found at 5-241 (DTWFTEHFQA…GWWSVTLSSK (237 aa)). Residue Gln-35 coordinates S-methyl-5'-thioadenosine. Positions 66 and 90 each coordinate spermidine. Residues Asp-110 and 141 to 142 (DG) each bind S-methyl-5'-thioadenosine. The Proton acceptor role is filled by Asp-160. 160–163 (DSTD) provides a ligand contact to spermidine. Residue Pro-167 participates in S-methyl-5'-thioadenosine binding.

The protein belongs to the spermidine/spermine synthase family. In terms of assembly, homodimer or homotetramer.

The protein localises to the cytoplasm. The catalysed reaction is S-adenosyl 3-(methylsulfanyl)propylamine + putrescine = S-methyl-5'-thioadenosine + spermidine + H(+). It participates in amine and polyamine biosynthesis; spermidine biosynthesis; spermidine from putrescine: step 1/1. Functionally, catalyzes the irreversible transfer of a propylamine group from the amino donor S-adenosylmethioninamine (decarboxy-AdoMet) to putrescine (1,4-diaminobutane) to yield spermidine. In Xylella fastidiosa (strain M12), this protein is Polyamine aminopropyltransferase.